The sequence spans 704 residues: Elongation factor G (704 aa).

Residues 8–290 (ARYRNIGISA…AVIDYLPSPV (283 aa)) enclose the tr-type G domain. GTP-binding positions include 17-24 (AHIDAGKT), 88-92 (DTPGH), and 142-145 (NKMD).

This sequence belongs to the TRAFAC class translation factor GTPase superfamily. Classic translation factor GTPase family. EF-G/EF-2 subfamily.

It localises to the cytoplasm. Functionally, catalyzes the GTP-dependent ribosomal translocation step during translation elongation. During this step, the ribosome changes from the pre-translocational (PRE) to the post-translocational (POST) state as the newly formed A-site-bound peptidyl-tRNA and P-site-bound deacylated tRNA move to the P and E sites, respectively. Catalyzes the coordinated movement of the two tRNA molecules, the mRNA and conformational changes in the ribosome. In Cronobacter sakazakii (strain ATCC BAA-894) (Enterobacter sakazakii), this protein is Elongation factor G.